Consider the following 520-residue polypeptide: T-box transcription factor TBX22 (520 aa).

The interval 1–91 is disordered; sequence MALSSRARAF…NSSESLEEKD (91 aa). Positions 33 to 49 are enriched in basic and acidic residues; the sequence is PELREKKGGEEEEERRS. Positions 67 to 84 are enriched in low complexity; it reads STSASSGCGSDSGYGNSS. Residues 96–283 constitute a DNA-binding region (T-box); it reads LQGSELWKRF…RNPFAKGFRD (188 aa).

In terms of tissue distribution, seems to be expressed at a low level.

Its subcellular location is the nucleus. Functionally, probable transcriptional regulator involved in developmental processes. This is major determinant crucial to palatogenesis. The chain is T-box transcription factor TBX22 (TBX22) from Homo sapiens (Human).